The chain runs to 265 residues: Triosephosphate isomerase (265 aa).

8–10 (NWK) contacts substrate. His103 serves as the catalytic Electrophile. The active-site Proton acceptor is the Glu182. Substrate-binding positions include Gly188, Ser226, and 247-248 (GG).

Belongs to the triosephosphate isomerase family. In terms of assembly, homodimer.

It localises to the cytoplasm. The catalysed reaction is D-glyceraldehyde 3-phosphate = dihydroxyacetone phosphate. The protein operates within carbohydrate biosynthesis; gluconeogenesis. It participates in carbohydrate degradation; glycolysis; D-glyceraldehyde 3-phosphate from glycerone phosphate: step 1/1. Involved in the gluconeogenesis. Catalyzes stereospecifically the conversion of dihydroxyacetone phosphate (DHAP) to D-glyceraldehyde-3-phosphate (G3P). The polypeptide is Triosephosphate isomerase (Psychrobacter sp. (strain PRwf-1)).